The primary structure comprises 64 residues: Large ribosomal subunit protein bL35 (64 aa).

Positions 1–15 are enriched in basic residues; that stretch reads MPKSKTHSGTAKRFK. The disordered stretch occupies residues 1-23; sequence MPKSKTHSGTAKRFKVSGSGKIL.

Belongs to the bacterial ribosomal protein bL35 family.

The protein is Large ribosomal subunit protein bL35 of Rhodococcus jostii (strain RHA1).